A 200-amino-acid polypeptide reads, in one-letter code: Probable GTP-binding protein EngB (200 aa).

The region spanning 22–194 (TLPEVAFVGR…WKEVLRLTLA (173 aa)) is the EngB-type G domain. GTP is bound by residues 30–37 (GRSNVGKS), 57–61 (GRTQL), 75–78 (DLPG), 142–145 (TKCD), and 173–175 (FSA). The Mg(2+) site is built by S37 and T59.

It belongs to the TRAFAC class TrmE-Era-EngA-EngB-Septin-like GTPase superfamily. EngB GTPase family. Requires Mg(2+) as cofactor.

Functionally, necessary for normal cell division and for the maintenance of normal septation. This is Probable GTP-binding protein EngB from Pelobacter propionicus (strain DSM 2379 / NBRC 103807 / OttBd1).